The following is a 232-amino-acid chain: 5'-methylthioadenosine/S-adenosylhomocysteine nucleosidase (232 aa).

The active-site Proton acceptor is glutamate 14. Residues glycine 80, valine 154, and 175-176 contribute to the substrate site; that span reads ME. Residue aspartate 199 is the Proton donor of the active site.

It belongs to the PNP/UDP phosphorylase family. MtnN subfamily.

The catalysed reaction is S-adenosyl-L-homocysteine + H2O = S-(5-deoxy-D-ribos-5-yl)-L-homocysteine + adenine. It catalyses the reaction S-methyl-5'-thioadenosine + H2O = 5-(methylsulfanyl)-D-ribose + adenine. It carries out the reaction 5'-deoxyadenosine + H2O = 5-deoxy-D-ribose + adenine. Its pathway is amino-acid biosynthesis; L-methionine biosynthesis via salvage pathway; S-methyl-5-thio-alpha-D-ribose 1-phosphate from S-methyl-5'-thioadenosine (hydrolase route): step 1/2. Its function is as follows. Catalyzes the irreversible cleavage of the glycosidic bond in both 5'-methylthioadenosine (MTA) and S-adenosylhomocysteine (SAH/AdoHcy) to adenine and the corresponding thioribose, 5'-methylthioribose and S-ribosylhomocysteine, respectively. Also cleaves 5'-deoxyadenosine, a toxic by-product of radical S-adenosylmethionine (SAM) enzymes, into 5-deoxyribose and adenine. This chain is 5'-methylthioadenosine/S-adenosylhomocysteine nucleosidase, found in Haemophilus ducreyi (strain 35000HP / ATCC 700724).